Consider the following 227-residue polypeptide: Cytochrome c oxidase subunit 2 (227 aa).

Over 1 to 14 the chain is Mitochondrial intermembrane; sequence MAHPVQLSLQDATS. The helical transmembrane segment at 15–45 threads the bilayer; that stretch reads PIMEELITFHDHAFMAMSLISFLVLYALALT. The Mitochondrial matrix portion of the chain corresponds to 46–59; it reads LTTKLTNTNITDAQ. A helical transmembrane segment spans residues 60–87; sequence EMETIWTILPAVILILIALPSLRVLYLT. Over 88 to 227 the chain is Mitochondrial intermembrane; it reads DEVNDPSLTI…IFEMGPVFTL (140 aa). Cu cation-binding residues include histidine 161, cysteine 196, glutamate 198, cysteine 200, histidine 204, and methionine 207. Glutamate 198 is a binding site for Mg(2+).

It belongs to the cytochrome c oxidase subunit 2 family. In terms of assembly, component of the cytochrome c oxidase (complex IV, CIV), a multisubunit enzyme composed of 14 subunits. The complex is composed of a catalytic core of 3 subunits MT-CO1, MT-CO2 and MT-CO3, encoded in the mitochondrial DNA, and 11 supernumerary subunits COX4I, COX5A, COX5B, COX6A, COX6B, COX6C, COX7A, COX7B, COX7C, COX8 and NDUFA4, which are encoded in the nuclear genome. The complex exists as a monomer or a dimer and forms supercomplexes (SCs) in the inner mitochondrial membrane with NADH-ubiquinone oxidoreductase (complex I, CI) and ubiquinol-cytochrome c oxidoreductase (cytochrome b-c1 complex, complex III, CIII), resulting in different assemblies (supercomplex SCI(1)III(2)IV(1) and megacomplex MCI(2)III(2)IV(2)). Found in a complex with TMEM177, COA6, COX18, COX20, SCO1 and SCO2. Interacts with TMEM177 in a COX20-dependent manner. Interacts with COX20. Interacts with COX16. Cu cation is required as a cofactor.

It is found in the mitochondrion inner membrane. The catalysed reaction is 4 Fe(II)-[cytochrome c] + O2 + 8 H(+)(in) = 4 Fe(III)-[cytochrome c] + 2 H2O + 4 H(+)(out). Its function is as follows. Component of the cytochrome c oxidase, the last enzyme in the mitochondrial electron transport chain which drives oxidative phosphorylation. The respiratory chain contains 3 multisubunit complexes succinate dehydrogenase (complex II, CII), ubiquinol-cytochrome c oxidoreductase (cytochrome b-c1 complex, complex III, CIII) and cytochrome c oxidase (complex IV, CIV), that cooperate to transfer electrons derived from NADH and succinate to molecular oxygen, creating an electrochemical gradient over the inner membrane that drives transmembrane transport and the ATP synthase. Cytochrome c oxidase is the component of the respiratory chain that catalyzes the reduction of oxygen to water. Electrons originating from reduced cytochrome c in the intermembrane space (IMS) are transferred via the dinuclear copper A center (CU(A)) of subunit 2 and heme A of subunit 1 to the active site in subunit 1, a binuclear center (BNC) formed by heme A3 and copper B (CU(B)). The BNC reduces molecular oxygen to 2 water molecules using 4 electrons from cytochrome c in the IMS and 4 protons from the mitochondrial matrix. The chain is Cytochrome c oxidase subunit 2 (MT-CO2) from Macaca fascicularis (Crab-eating macaque).